A 642-amino-acid polypeptide reads, in one-letter code: 1-deoxy-D-xylulose-5-phosphate synthase (642 aa).

Residues H73 and 114–116 contribute to the thiamine diphosphate site; that span reads SHA. D145 lines the Mg(2+) pocket. Thiamine diphosphate is bound by residues 146–147, N175, F286, and E367; that span reads GA. Position 175 (N175) interacts with Mg(2+).

It belongs to the transketolase family. DXPS subfamily. Homodimer. Requires Mg(2+) as cofactor. The cofactor is thiamine diphosphate.

The enzyme catalyses D-glyceraldehyde 3-phosphate + pyruvate + H(+) = 1-deoxy-D-xylulose 5-phosphate + CO2. Its pathway is metabolic intermediate biosynthesis; 1-deoxy-D-xylulose 5-phosphate biosynthesis; 1-deoxy-D-xylulose 5-phosphate from D-glyceraldehyde 3-phosphate and pyruvate: step 1/1. Functionally, catalyzes the acyloin condensation reaction between C atoms 2 and 3 of pyruvate and glyceraldehyde 3-phosphate to yield 1-deoxy-D-xylulose-5-phosphate (DXP). This is 1-deoxy-D-xylulose-5-phosphate synthase from Saccharopolyspora erythraea (strain ATCC 11635 / DSM 40517 / JCM 4748 / NBRC 13426 / NCIMB 8594 / NRRL 2338).